A 277-amino-acid polypeptide reads, in one-letter code: NADPH-dependent 7-cyano-7-deazaguanine reductase (277 aa).

Residue 83-85 (VES) coordinates substrate. 85–86 (SK) serves as a coordination point for NADPH. Catalysis depends on Cys184, which acts as the Thioimide intermediate. Asp191 functions as the Proton donor in the catalytic mechanism. 223–224 (HE) serves as a coordination point for substrate. Position 252–253 (252–253 (RG)) interacts with NADPH.

The protein belongs to the GTP cyclohydrolase I family. QueF type 2 subfamily. In terms of assembly, homodimer.

The protein resides in the cytoplasm. It carries out the reaction 7-aminomethyl-7-carbaguanine + 2 NADP(+) = 7-cyano-7-deazaguanine + 2 NADPH + 3 H(+). The protein operates within tRNA modification; tRNA-queuosine biosynthesis. In terms of biological role, catalyzes the NADPH-dependent reduction of 7-cyano-7-deazaguanine (preQ0) to 7-aminomethyl-7-deazaguanine (preQ1). The polypeptide is NADPH-dependent 7-cyano-7-deazaguanine reductase (Ralstonia nicotianae (strain ATCC BAA-1114 / GMI1000) (Ralstonia solanacearum)).